The sequence spans 354 residues: Uroporphyrinogen decarboxylase (354 aa).

Residues 27–31 (RQAGR), D77, Y154, T209, and H327 each bind substrate.

This sequence belongs to the uroporphyrinogen decarboxylase family. In terms of assembly, homodimer.

The protein resides in the cytoplasm. The catalysed reaction is uroporphyrinogen III + 4 H(+) = coproporphyrinogen III + 4 CO2. The protein operates within porphyrin-containing compound metabolism; protoporphyrin-IX biosynthesis; coproporphyrinogen-III from 5-aminolevulinate: step 4/4. Its function is as follows. Catalyzes the decarboxylation of four acetate groups of uroporphyrinogen-III to yield coproporphyrinogen-III. The chain is Uroporphyrinogen decarboxylase from Histophilus somni (strain 129Pt) (Haemophilus somnus).